Consider the following 501-residue polypeptide: Lysine--tRNA ligase (501 aa).

Mg(2+)-binding residues include glutamate 404 and glutamate 411.

Belongs to the class-II aminoacyl-tRNA synthetase family. As to quaternary structure, homodimer. The cofactor is Mg(2+).

It is found in the cytoplasm. The enzyme catalyses tRNA(Lys) + L-lysine + ATP = L-lysyl-tRNA(Lys) + AMP + diphosphate. This is Lysine--tRNA ligase (lysS) from Campylobacter jejuni subsp. jejuni serotype O:2 (strain ATCC 700819 / NCTC 11168).